The following is a 453-amino-acid chain: Bifunctional protein GlmU (453 aa).

Residues 1–226 (MAFSVVILAA…EIEVEGINNR (226 aa)) form a pyrophosphorylase region. UDP-N-acetyl-alpha-D-glucosamine is bound by residues 8–11 (LAAG), Lys-22, Gln-73, and 78–79 (GT). Asp-102 provides a ligand contact to Mg(2+). UDP-N-acetyl-alpha-D-glucosamine-binding residues include Gly-137, Glu-151, Asn-166, and Asn-224. Position 224 (Asn-224) interacts with Mg(2+). The tract at residues 227 to 247 (KQLAAIERAFQFEQAQELMMQ) is linker. Positions 248 to 453 (GVSLLDPHRF…SGWQRPTKPE (206 aa)) are N-acetyltransferase. UDP-N-acetyl-alpha-D-glucosamine is bound by residues Arg-330 and Lys-348. Residue His-360 is the Proton acceptor of the active site. 2 residues coordinate UDP-N-acetyl-alpha-D-glucosamine: Tyr-363 and Asn-374. Acetyl-CoA is bound by residues Ala-377, 383-384 (NY), Ser-402, Ala-420, and Arg-437.

This sequence in the N-terminal section; belongs to the N-acetylglucosamine-1-phosphate uridyltransferase family. The protein in the C-terminal section; belongs to the transferase hexapeptide repeat family. As to quaternary structure, homotrimer. Mg(2+) serves as cofactor.

The protein resides in the cytoplasm. It carries out the reaction alpha-D-glucosamine 1-phosphate + acetyl-CoA = N-acetyl-alpha-D-glucosamine 1-phosphate + CoA + H(+). It catalyses the reaction N-acetyl-alpha-D-glucosamine 1-phosphate + UTP + H(+) = UDP-N-acetyl-alpha-D-glucosamine + diphosphate. It participates in nucleotide-sugar biosynthesis; UDP-N-acetyl-alpha-D-glucosamine biosynthesis; N-acetyl-alpha-D-glucosamine 1-phosphate from alpha-D-glucosamine 6-phosphate (route II): step 2/2. Its pathway is nucleotide-sugar biosynthesis; UDP-N-acetyl-alpha-D-glucosamine biosynthesis; UDP-N-acetyl-alpha-D-glucosamine from N-acetyl-alpha-D-glucosamine 1-phosphate: step 1/1. The protein operates within bacterial outer membrane biogenesis; LPS lipid A biosynthesis. Catalyzes the last two sequential reactions in the de novo biosynthetic pathway for UDP-N-acetylglucosamine (UDP-GlcNAc). The C-terminal domain catalyzes the transfer of acetyl group from acetyl coenzyme A to glucosamine-1-phosphate (GlcN-1-P) to produce N-acetylglucosamine-1-phosphate (GlcNAc-1-P), which is converted into UDP-GlcNAc by the transfer of uridine 5-monophosphate (from uridine 5-triphosphate), a reaction catalyzed by the N-terminal domain. The polypeptide is Bifunctional protein GlmU (Pseudoalteromonas atlantica (strain T6c / ATCC BAA-1087)).